Consider the following 298-residue polypeptide: Acetylglutamate kinase (298 aa).

Substrate is bound by residues 69 to 70, R91, and N196; that span reads GG.

It belongs to the acetylglutamate kinase family. ArgB subfamily.

The protein resides in the cytoplasm. The catalysed reaction is N-acetyl-L-glutamate + ATP = N-acetyl-L-glutamyl 5-phosphate + ADP. The protein operates within amino-acid biosynthesis; L-arginine biosynthesis; N(2)-acetyl-L-ornithine from L-glutamate: step 2/4. Its function is as follows. Catalyzes the ATP-dependent phosphorylation of N-acetyl-L-glutamate. The polypeptide is Acetylglutamate kinase (Rhodopseudomonas palustris (strain BisB5)).